The following is a 307-amino-acid chain: Elongation factor Ts (307 aa).

Residues 80 to 83 are involved in Mg(2+) ion dislocation from EF-Tu; sequence TDFV.

The protein belongs to the EF-Ts family.

The protein resides in the cytoplasm. In terms of biological role, associates with the EF-Tu.GDP complex and induces the exchange of GDP to GTP. It remains bound to the aminoacyl-tRNA.EF-Tu.GTP complex up to the GTP hydrolysis stage on the ribosome. The polypeptide is Elongation factor Ts (Rhizorhabdus wittichii (strain DSM 6014 / CCUG 31198 / JCM 15750 / NBRC 105917 / EY 4224 / RW1) (Sphingomonas wittichii)).